Reading from the N-terminus, the 481-residue chain is UDP-N-acetylmuramoyl-L-alanyl-D-glutamate--L-lysine ligase (481 aa).

Residue S42 coordinates UDP-N-acetyl-alpha-D-muramoyl-L-alanyl-D-glutamate. Position 118-124 (118-124 (GTKGKTT)) interacts with ATP. UDP-N-acetyl-alpha-D-muramoyl-L-alanyl-D-glutamate is bound by residues Q158, 160 to 161 (TT), S187, and R195. K229 is subject to N6-carboxylysine. The L-lysine recognition motif signature appears at 404-407 (DDPN).

It belongs to the MurCDEF family. MurE subfamily. Carboxylation is probably crucial for Mg(2+) binding and, consequently, for the gamma-phosphate positioning of ATP.

It is found in the cytoplasm. The enzyme catalyses UDP-N-acetyl-alpha-D-muramoyl-L-alanyl-D-glutamate + L-lysine + ATP = UDP-N-acetyl-alpha-D-muramoyl-L-alanyl-gamma-D-glutamyl-L-lysine + ADP + phosphate + H(+). It functions in the pathway cell wall biogenesis; peptidoglycan biosynthesis. Its function is as follows. Catalyzes the addition of L-lysine to the nucleotide precursor UDP-N-acetylmuramoyl-L-alanyl-D-glutamate (UMAG) in the biosynthesis of bacterial cell-wall peptidoglycan. This chain is UDP-N-acetylmuramoyl-L-alanyl-D-glutamate--L-lysine ligase, found in Streptococcus pyogenes serotype M28 (strain MGAS6180).